The primary structure comprises 280 residues: Thymidylate synthase (280 aa).

Arg21 provides a ligand contact to dUMP. (6R)-5,10-methylene-5,6,7,8-tetrahydrofolate is bound at residue His51. A dUMP-binding site is contributed by 142–143 (RR). Cys162 functions as the Nucleophile in the catalytic mechanism. DUMP is bound by residues 182–185 (RSAD), Asn193, and 223–225 (HLY). Asp185 lines the (6R)-5,10-methylene-5,6,7,8-tetrahydrofolate pocket. (6R)-5,10-methylene-5,6,7,8-tetrahydrofolate is bound at residue Ala279.

The protein belongs to the thymidylate synthase family. Bacterial-type ThyA subfamily. As to quaternary structure, homodimer.

It localises to the cytoplasm. It carries out the reaction dUMP + (6R)-5,10-methylene-5,6,7,8-tetrahydrofolate = 7,8-dihydrofolate + dTMP. It functions in the pathway pyrimidine metabolism; dTTP biosynthesis. In terms of biological role, catalyzes the reductive methylation of 2'-deoxyuridine-5'-monophosphate (dUMP) to 2'-deoxythymidine-5'-monophosphate (dTMP) while utilizing 5,10-methylenetetrahydrofolate (mTHF) as the methyl donor and reductant in the reaction, yielding dihydrofolate (DHF) as a by-product. This enzymatic reaction provides an intracellular de novo source of dTMP, an essential precursor for DNA biosynthesis. This Acinetobacter baumannii (strain AB307-0294) protein is Thymidylate synthase.